Consider the following 1403-residue polypeptide: Sushi, nidogen and EGF-like domain-containing protein 1 (1403 aa).

The first 24 residues, 1-24, serve as a signal peptide directing secretion; sequence MRLGAAWALLLAAALGLGTRGVRA. Positions 103 to 258 constitute an NIDO domain; the sequence is AFWADVDNRR…GRWAFRIDDA (156 aa). 3 consecutive EGF-like domains span residues 268-309, 311-347, and 349-385; these read TTSV…RRCH, DVNE…PTCE, and AQSP…ATCE. 18 disulfides stabilise this stretch: C272/C284, C278/C297, C299/C308, C315/C326, C320/C335, C337/C346, C353/C364, C358/C373, C375/C384, C391/C402, C396/C411, C413/C422, C433/C444, C438/C453, C455/C464, C472/C480, C474/C488, and C490/C499. N-linked (GlcNAc...) asparagine glycosylation is present at N292. The EGF-like 4; calcium-binding domain occupies 387-423; that stretch reads DVDECSSDPCQNGGSCVDLVGNYSCICVEPFEGPQCE. A glycan (N-linked (GlcNAc...) asparagine) is linked at N408. 2 consecutive EGF-like domains span residues 429 to 465 and 468 to 500; these read VPSP…LDCR and ILND…LLCE. A glycan (N-linked (GlcNAc...) asparagine) is linked at N484. N536 carries an N-linked (GlcNAc...) asparagine glycan. 4 EGF-like domains span residues 541–577, 580–616, 619–655, and 657–693; these read LPSP…RHCE, RPHL…RHCE, KPDS…RHCE, and APSP…HRCQ. Intrachain disulfides connect C545–C556, C550–C565, C567–C576, C584–C595, C589–C604, C606–C615, C623–C634, C628–C643, C645–C654, C661–C672, C666–C681, C683–C692, C698–C739, C724–C751, C757–C768, C762–C777, C779–C788, C795–C806, C800–C815, C817–C826, C833–C844, C838–C853, C855–C864, C871–C882, C876–C891, and C893–C902. The Sushi domain maps to 696–753; that stretch reads VDCGHPEEVEHATMRFNGTHVGSVALYTCEPGFSLSALSHIRVCQPQGVWSQPPQCIE. N712 is a glycosylation site (N-linked (GlcNAc...) asparagine). The EGF-like 11; calcium-binding domain maps to 753–789; that stretch reads EVDECRSQPCLHGGSCQDLIADYQCLCSPGYEGVHCE. Positions 791-827 constitute an EGF-like 12; calcium-binding domain; sequence ETDECQAQPCRNGGSCRDLPRAFICQCPEGFVGIHCE. EGF-like domains follow at residues 829–865 and 867–903; these read EVDA…YNCE and VSDP…KDCT. A glycan (N-linked (GlcNAc...) asparagine) is linked at N886. Fibronectin type-III domains are found at residues 908-1006, 1007-1105, and 1106-1200; these read PPTA…TRPR, PIED…TRPL, and PPAN…SPRD. Residues N977, N1015, N1109, N1139, and N1298 are each glycosylated (N-linked (GlcNAc...) asparagine). The EGF-like 15 domain maps to 1306–1342; it reads TPGSCSEDACQNGGTCVPGADAHSCDCRPGFKGRHCE. Cystine bridges form between C1310-C1321, C1315-C1330, and C1332-C1341.

In terms of processing, phosphorylated on serine and threonine residues. Post-translationally, N-glycosylated. In terms of tissue distribution, expressed in lung.

It is found in the secreted. The protein localises to the extracellular space. It localises to the extracellular matrix. This chain is Sushi, nidogen and EGF-like domain-containing protein 1, found in Mus musculus (Mouse).